Consider the following 88-residue polypeptide: Small ribosomal subunit protein bS16 (88 aa).

Belongs to the bacterial ribosomal protein bS16 family.

This chain is Small ribosomal subunit protein bS16, found in Thermus aquaticus.